Here is a 112-residue protein sequence, read N- to C-terminus: Small capsomere-interacting protein (112 aa).

It belongs to the herpesviridae small capsomere-interacting protein family. In terms of assembly, interacts with the major capsid protein/MCP. Interacts with host TSPAN7; this interaction may be responsible for the presence of TSPAN7 in extracellular virions. Interacts with host MAPRE3 and DYNLT1; these interactions mediate retrograde transport of viral capsids.

It is found in the virion. The protein localises to the host nucleus. Participates in the assembly of the infectious particles by decorating the outer surface of the capsid shell and thus forming a layer between the capsid and the tegument. Complexes composed of the major capsid protein and small capsomere-interacting protein/SCP assemble together in the host cytoplasm and are translocated to the nucleus, where they accumulate and participate in capsid assembly. Interaction with host dynein light chains suggests a possible function in the retrogarde transport of incoming viral capsids. The protein is Small capsomere-interacting protein of Human herpesvirus 1 (strain 17) (HHV-1).